The chain runs to 176 residues: dCTP deaminase (176 aa).

DCTP-binding positions include Arg-99–Arg-104 and Asp-115. Residue Glu-125 is the Proton donor/acceptor of the active site. DCTP is bound at residue Gln-163.

It belongs to the dCTP deaminase family. In terms of assembly, homotrimer.

It catalyses the reaction dCTP + H2O + H(+) = dUTP + NH4(+). It functions in the pathway pyrimidine metabolism; dUMP biosynthesis; dUMP from dCTP (dUTP route): step 1/2. In terms of biological role, catalyzes the deamination of dCTP to dUTP. In Pyrobaculum arsenaticum (strain DSM 13514 / JCM 11321 / PZ6), this protein is dCTP deaminase.